Consider the following 260-residue polypeptide: MVKEKEKPKNEIIIETENLSLFYTDFKALNEINIKILKNSITALIGPSGCGKSTFLRTLNRMNDLVEGIKIEGNVIYEGKNIYSNNFDILELRRKIGMVFQTPNPFLMSIYDNISYGPKIHGTKDKKKLDEIVEQSLKKSALWDEVKDKLNTNALSLSGGQQQRLCIARTLAIEPNVILMDEPTSALDPISTGKIEELIINLKESYTIIIVTHNMQQAGRISDKTAFFLNGCIEEESPTDELFFNPKNTKTEEYISGKFG.

An ABC transporter domain is found at 14–255 (IETENLSLFY…PKNTKTEEYI (242 aa)). Residue 46 to 53 (GPSGCGKS) participates in ATP binding.

The protein belongs to the ABC transporter superfamily. Phosphate importer (TC 3.A.1.7) family. In terms of assembly, the complex is composed of two ATP-binding proteins (PstB), two transmembrane proteins (PstC and PstA) and a solute-binding protein (PstS).

The protein localises to the cell inner membrane. It catalyses the reaction phosphate(out) + ATP + H2O = ADP + 2 phosphate(in) + H(+). Functionally, part of the ABC transporter complex PstSACB involved in phosphate import. Responsible for energy coupling to the transport system. In Borrelia garinii subsp. bavariensis (strain ATCC BAA-2496 / DSM 23469 / PBi) (Borreliella bavariensis), this protein is Phosphate import ATP-binding protein PstB.